A 149-amino-acid chain; its full sequence is Calmodulin-B (149 aa).

An N-acetylalanine modification is found at Ala2. 4 EF-hand domains span residues 8-43 (EQIA…LGQN), 44-79 (PTEA…KMKE), 81-116 (DSEE…LGEK), and 117-149 (LTDE…MTCK). The Ca(2+) site is built by Asp21, Asp23, Asp25, Thr27, Glu32, Asp57, Asp59, Asn61, Thr63, Glu68, Asp94, Asp96, Asn98, and Glu105. Lys116 is modified (N6,N6,N6-trimethyllysine). 5 residues coordinate Ca(2+): Asp130, Asp132, Asp134, Gln136, and Glu141.

The protein belongs to the calmodulin family.

Its function is as follows. Calmodulin mediates the control of a large number of enzymes, ion channels and other proteins by Ca(2+). Among the enzymes to be stimulated by the calmodulin-Ca(2+) complex are a number of protein kinases and phosphatases. This chain is Calmodulin-B, found in Halocynthia roretzi (Sea squirt).